A 224-amino-acid chain; its full sequence is 7-cyano-7-deazaguanine synthase (224 aa).

9–19 (ISGGMDSTLCA) serves as a coordination point for ATP. 4 residues coordinate Zn(2+): Cys190, Cys198, Cys201, and Cys204.

Belongs to the QueC family. Zn(2+) serves as cofactor.

The catalysed reaction is 7-carboxy-7-deazaguanine + NH4(+) + ATP = 7-cyano-7-deazaguanine + ADP + phosphate + H2O + H(+). It functions in the pathway purine metabolism; 7-cyano-7-deazaguanine biosynthesis. Functionally, catalyzes the ATP-dependent conversion of 7-carboxy-7-deazaguanine (CDG) to 7-cyano-7-deazaguanine (preQ(0)). The chain is 7-cyano-7-deazaguanine synthase from Campylobacter jejuni subsp. jejuni serotype O:6 (strain 81116 / NCTC 11828).